A 226-amino-acid polypeptide reads, in one-letter code: Pathogenesis-related protein R major form (226 aa).

The first 25 residues, 1–25, serve as a signal peptide directing secretion; it reads MNFLKSFPFFAFLYFGQYFVAVTHA. 8 disulfides stabilise this stretch: Cys-34–Cys-225, Cys-75–Cys-85, Cys-90–Cys-96, Cys-140–Cys-214, Cys-145–Cys-197, Cys-153–Cys-163, Cys-167–Cys-176, and Cys-177–Cys-184.

Belongs to the thaumatin family.

It is found in the vacuole. In Nicotiana tabacum (Common tobacco), this protein is Pathogenesis-related protein R major form.